The following is a 309-amino-acid chain: Taste receptor type 2 member 43 (309 aa).

Residue Met1 is a topological domain, extracellular. Residues 2 to 22 form a helical membrane-spanning segment; that stretch reads ITFLPIIFSSLVVVTFVIGNF. The Cytoplasmic segment spans residues 23–46; sequence ANGFIALVNSIEWFKRQKISFADQ. A helical transmembrane segment spans residues 47-67; sequence ILTALAVSRVGLLWVLLLNWY. Over 68-86 the chain is Extracellular; the sequence is STVLNPAFNSVEVRTTAYN. The helical transmembrane segment at 87–107 threads the bilayer; sequence IWAVINHFSNWLATSLSIFYL. Topologically, residues 108 to 126 are cytoplasmic; the sequence is LKIANFSNFIFLHLKRRVK. The helical transmembrane segment at 127–147 threads the bilayer; the sequence is SVILVMLLGPLLFLACHLFVI. Topologically, residues 148-178 are extracellular; the sequence is NMNEIVRTKEFEGNMTWKIKLKSAMYFSNMT. N-linked (GlcNAc...) asparagine glycans are attached at residues Asn161 and Asn176. Residues 179-199 traverse the membrane as a helical segment; sequence VTMVANLVPFTLTLLSFLLLI. Residues 200–229 are Cytoplasmic-facing; that stretch reads CSLCKHLKKMQLHGKGSQDPSTKVHIKVLQ. The helical transmembrane segment at 230–250 threads the bilayer; that stretch reads TVISFLLLCAIYFLSIMISVW. Topologically, residues 251–259 are extracellular; that stretch reads SFGSLKNKP. The helical transmembrane segment at 260–280 threads the bilayer; that stretch reads VFMFCKAMRFSYPSIHPFILI. The Cytoplasmic portion of the chain corresponds to 281–309; it reads WGNKKLKQTFLSVFWQMRYWVKGEKTSSP.

The protein belongs to the G-protein coupled receptor T2R family.

Its subcellular location is the membrane. The protein localises to the cell projection. The protein resides in the cilium membrane. In terms of biological role, gustducin-coupled receptor immplicated in the perception of bitter compounds in the oral cavity and the gastrointestinal tract. Signals through PLCB2 and the calcium-regulated cation channel TRPM5. Activated by the sulfonyl amide sweeteners saccharin and acesulfame K. In airway epithelial cells, binding of bitter compounds increases the intracellular calcium ion concentration and stimulates ciliary beat frequency. May act as chemosensory receptors in airway epithelial cells to detect and eliminate potential noxious agents from the airways. This Pan troglodytes (Chimpanzee) protein is Taste receptor type 2 member 43 (TAS2R43).